Reading from the N-terminus, the 289-residue chain is (3R)-3-[(carboxymethyl)amino]fatty acid oxygenase/decarboxylase (289 aa).

A (3R)-3-[(carboxymethyl)amino]fatty acid-binding residues include tyrosine 65, tyrosine 70, and glycine 93. Residues histidine 97 and aspartate 99 each coordinate Fe(2+). The a (3R)-3-[(carboxymethyl)amino]fatty acid site is built by tyrosine 100 and lysine 158. Histidine 260 provides a ligand contact to Fe(2+). Residue histidine 264 participates in 2-oxoglutarate binding. Residue arginine 275 coordinates a (3R)-3-[(carboxymethyl)amino]fatty acid.

Belongs to the TfdA dioxygenase family. Requires Fe(2+) as cofactor.

It carries out the reaction a (3R)-3-[(carboxymethyl)amino]fatty acid + 2 2-oxoglutarate + 2 O2 = a (3R)-3-isocyanyl-fatty acid + 2 succinate + 3 CO2 + 2 H2O. It catalyses the reaction a (3R)-3-[(carboxymethyl)amino]fatty acid + 2-oxoglutarate + O2 = a (3R)-3-{[carboxy(hydroxy)methyl]amino}fatty acid + succinate + CO2. The enzyme catalyses a (3R)-3-{[carboxy(hydroxy)methyl]amino}fatty acid + 2-oxoglutarate + O2 = a (3R)-3-isocyanyl-fatty acid + succinate + 2 CO2 + 2 H2O. In terms of biological role, involved in the biosynthesis of a unique class of isonitrile lipopeptides (INLPs) that seem to play a role in metal acquisition. Catalyzes the conversion of (3R)-3-[(carboxymethyl)amino]fatty acids to (3R)-3-isocyanyl-fatty acids through an oxidative decarboxylation mechanism, thereby generating the isonitrile group of INLPs. The protein is (3R)-3-[(carboxymethyl)amino]fatty acid oxygenase/decarboxylase of Mycobacterium bovis (strain ATCC BAA-935 / AF2122/97).